A 148-amino-acid polypeptide reads, in one-letter code: MKIILTHEVSGLGTAGDVVDVKDGYARNYLVPRGFAIRWTKGGEKDVAQIRRARKIHEIATIEQANEIKAKLEGVKVRLAVRSGDAGRLFGSVTPADVAAAIKAAGGPDVDKRRVELGSPIKTLGGHQVSVRLHPEVAAKLGVEVVAA.

It belongs to the bacterial ribosomal protein bL9 family.

Functionally, binds to the 23S rRNA. In Streptomyces griseus subsp. griseus (strain JCM 4626 / CBS 651.72 / NBRC 13350 / KCC S-0626 / ISP 5235), this protein is Large ribosomal subunit protein bL9.